We begin with the raw amino-acid sequence, 91 residues long: Transcription factor ILI3 (91 aa).

The 56-residue stretch at 3–58 (SRRGGGGGGGRITDEEINELISKLQALLPESSRSRGASRSSASKLLKETCSYIKSL) folds into the bHLH domain.

It belongs to the bHLH protein family.

Functionally, atypical and probable non DNA-binding bHLH transcription that integrates multiple signaling pathways to regulate cell elongation and plant development. This chain is Transcription factor ILI3 (ILI3), found in Oryza sativa subsp. indica (Rice).